We begin with the raw amino-acid sequence, 718 residues long: Catalase-peroxidase (718 aa).

Residues 1–24 form a disordered region; that stretch reads MDQKSDNAGKCPVAHTVPKGRSNR. Residues 95 to 217 constitute a cross-link (tryptophyl-tyrosyl-methioninium (Trp-Tyr) (with M-243)); the sequence is WHSAGTYRIT…LAAVQMGLIY (123 aa). His-96 (proton acceptor) is an active-site residue. Positions 217–243 form a cross-link, tryptophyl-tyrosyl-methioninium (Tyr-Met) (with W-95); it reads YVNPEGPNGNPDPVAAAREIRETFARM. His-258 lines the heme b pocket.

It belongs to the peroxidase family. Peroxidase/catalase subfamily. As to quaternary structure, homodimer or homotetramer. Heme b is required as a cofactor. Post-translationally, formation of the three residue Trp-Tyr-Met cross-link is important for the catalase, but not the peroxidase activity of the enzyme.

It carries out the reaction H2O2 + AH2 = A + 2 H2O. The enzyme catalyses 2 H2O2 = O2 + 2 H2O. Bifunctional enzyme with both catalase and broad-spectrum peroxidase activity. The chain is Catalase-peroxidase from Sinorhizobium fredii (strain NBRC 101917 / NGR234).